Reading from the N-terminus, the 122-residue chain is U1 small nuclear ribonucleoprotein C (122 aa).

The Matrin-type zinc-finger motif lies at 4 to 36 (YFCDYCDTYLTHDSPSVRKTHCSGRKHKDNVKM).

This sequence belongs to the U1 small nuclear ribonucleoprotein C family. As to quaternary structure, U1 snRNP is composed of the 7 core Sm proteins B/B', D1, D2, D3, E, F and G that assemble in a heptameric protein ring on the Sm site of the small nuclear RNA to form the core snRNP, and at least 3 U1 snRNP-specific proteins U1-70K, U1-A and U1-C. U1-C interacts with U1 snRNA and the 5' splice-site region of the pre-mRNA.

The protein localises to the nucleus. Functionally, component of the spliceosomal U1 snRNP, which is essential for recognition of the pre-mRNA 5' splice-site and the subsequent assembly of the spliceosome. U1-C is directly involved in initial 5' splice-site recognition for both constitutive and regulated alternative splicing. The interaction with the 5' splice-site seems to precede base-pairing between the pre-mRNA and the U1 snRNA. Stimulates commitment or early (E) complex formation by stabilizing the base pairing of the 5' end of the U1 snRNA and the 5' splice-site region. This is U1 small nuclear ribonucleoprotein C from Ciona intestinalis (Transparent sea squirt).